The chain runs to 100 residues: uncharacterized protein (100 aa).

The first 26 residues, 1 to 26 (MKRLLVSLRVWMVFLMNWVTPDRKTA), serve as a signal peptide directing secretion.

This is an uncharacterized protein from Bacillus subtilis (strain 168).